A 594-amino-acid polypeptide reads, in one-letter code: Elongation factor 4 (594 aa).

The 183-residue stretch at K2–E184 folds into the tr-type G domain. Residues D14–T19 and N131–D134 contribute to the GTP site.

Belongs to the TRAFAC class translation factor GTPase superfamily. Classic translation factor GTPase family. LepA subfamily.

Its subcellular location is the cell inner membrane. The catalysed reaction is GTP + H2O = GDP + phosphate + H(+). In terms of biological role, required for accurate and efficient protein synthesis under certain stress conditions. May act as a fidelity factor of the translation reaction, by catalyzing a one-codon backward translocation of tRNAs on improperly translocated ribosomes. Back-translocation proceeds from a post-translocation (POST) complex to a pre-translocation (PRE) complex, thus giving elongation factor G a second chance to translocate the tRNAs correctly. Binds to ribosomes in a GTP-dependent manner. This Francisella tularensis subsp. tularensis (strain FSC 198) protein is Elongation factor 4.